Reading from the N-terminus, the 226-residue chain is Lipoprotein-releasing system ATP-binding protein LolD (226 aa).

The ABC transporter domain maps to 6–226 (IELKSVERHY…TLADGKVVPL (221 aa)). 42-49 (APSGTGKS) serves as a coordination point for ATP.

The protein belongs to the ABC transporter superfamily. Lipoprotein translocase (TC 3.A.1.125) family. The complex is composed of two ATP-binding proteins (LolD) and two transmembrane proteins (LolC and LolE).

Its subcellular location is the cell inner membrane. In terms of biological role, part of the ABC transporter complex LolCDE involved in the translocation of mature outer membrane-directed lipoproteins, from the inner membrane to the periplasmic chaperone, LolA. Responsible for the formation of the LolA-lipoprotein complex in an ATP-dependent manner. This is Lipoprotein-releasing system ATP-binding protein LolD from Mesorhizobium japonicum (strain LMG 29417 / CECT 9101 / MAFF 303099) (Mesorhizobium loti (strain MAFF 303099)).